The following is a 225-amino-acid chain: Ribulose-phosphate 3-epimerase (225 aa).

Ser-10 contributes to the substrate binding site. Positions 35, 37, and 68 each coordinate a divalent metal cation. Asp-37 serves as the catalytic Proton acceptor. Substrate-binding positions include His-68, 144–147 (GFGG), and 175–177 (DGG). Asp-175 is an a divalent metal cation binding site. Asp-175 acts as the Proton donor in catalysis.

The protein belongs to the ribulose-phosphate 3-epimerase family. Requires a divalent metal cation as cofactor.

It catalyses the reaction D-ribulose 5-phosphate = D-xylulose 5-phosphate. It functions in the pathway carbohydrate degradation. Catalyzes the reversible epimerization of D-ribulose 5-phosphate to D-xylulose 5-phosphate. This Rhodospirillum rubrum protein is Ribulose-phosphate 3-epimerase.